Reading from the N-terminus, the 348-residue chain is Papaya proteinase 4 (348 aa).

The N-terminal stretch at 1–18 (MAIICSFSKLLFVAICLF) is a signal peptide. Residues 19-132 (GHMSLSYCDF…EEFVNEDIVD (114 aa)) constitute a propeptide, activation peptide. Cystine bridges form between C154–C195, C188–C227, and C285–C336. The active site involves C157. Catalysis depends on residues H291 and N311.

It belongs to the peptidase C1 family.

The enzyme catalyses Preferential cleavage: Gly-|-Xaa, in proteins and in small molecule substrates.. Not inhibited by cystatin. Functionally, thiol protease with a substrate specificity very different from the other thiol proteases. This is Papaya proteinase 4 from Carica papaya (Papaya).